The chain runs to 552 residues: Acyl-CoA-dependent acyltransferase MAC1 (552 aa).

The protein belongs to the trichothecene O-acetyltransferase family.

Its pathway is secondary metabolite biosynthesis. Functionally, acyl-CoA-dependent acyltransferase; part of the gene cluster that mediates the biosynthesis of mannosylerythritol lipids (MELs), surface-active substances that enhance the availability of water-insoluble substrates. Depending on the number of acetyl groups, mannosylerythritol lipids can be differentiated into MEL A (fully acetylated), MEL B and MEL C (monoacetylated at R-6 and R-4, respectively), and the fully deacetylated MEL D. The first step in the pathway is the generation of mannosylerythritol by the glycosyltransferase EMT1 which catalyzes the transfer of GDP-mannose to the C-4 atom of meso-erythritol. This reaction has to be stereospecific, since only mannosyl-D-erythritol is generated. The produced disaccharide is subsequently acylated with fatty acids of various lengths by the acyltransferases MAC1 and MAC2 at positions C-2 and C-3, repectively. The existence of MEL derivatives which carry an acetyl group at C-2 implies that at least MAC1 also accepts acetyl-CoA as a donor. The final step of MEL biosynthesis is the acetylation of the fully acylated mannosylerythritol lipids catalyzed by the acetyl-CoA-dependent acetyltransferase MAT1. MAT1 displays a relaxed regioselectivity and is able to transfer acetylgroups to both positions C-4 and C-6 of the mannosyl moiety. The sequence is that of Acyl-CoA-dependent acyltransferase MAC1 from Pseudozyma antarctica (strain T-34) (Yeast).